Here is a 962-residue protein sequence, read N- to C-terminus: Activity-dependent neuroprotective protein 2a (962 aa).

The C2H2-type 1 zinc-finger motif lies at 75–98 (LCCSLCWYSSRSVPTFRSHIHRCH). Residues 108–130 (LMCPYCPFVSSPKVTEQHIQFFH) form a C2H2-type 2; degenerate zinc finger. Residues 165-188 (YTCATCGYHDSLLYVMKKHVLVNH) form a C2H2-type 3; degenerate zinc finger. The segment at 219-244 (YHCKLCKLPAETIEHLLYHILSSEKH) adopts a C2H2-type 4 zinc-finger fold. The segment at 527–547 (VKCLRCKILLTEQGIFQHLLH) adopts a C2H2-type 5; degenerate zinc-finger fold. 2 consecutive C2H2-type zinc fingers follow at residues 549–572 (LKCLFCPQMFYSFKQIMEHSKKEH) and 650–673 (NACPFCQVKLQNPEDYELHLQTKH). Residues 688-712 (YKCIYCFGVYTEKSTPKTISIHVQR) form a C2H2-type 8; degenerate zinc finger. The disordered stretch occupies residues 753–781 (QGAPEFPKPKKEAVTPRNRRRNTKASKTG). Positions 795–854 (PMGMERTSFEDRKDFLSQYFHRKPYVTKTEIELLASRLWINKADVKAHFNSKLTKCLKAI) form a DNA-binding region, homeobox.

The protein localises to the nucleus. Its function is as follows. May be involved in transcriptional regulation. Required for progression through late erythroid differentiation. May be involved in vasculogenesis. This Danio rerio (Zebrafish) protein is Activity-dependent neuroprotective protein 2a.